Reading from the N-terminus, the 364-residue chain is MALTLEELVKRFGGEIAGDAQCKVGGLAPLDQAGPQQLAFLANPKYLSQVESTRAGAVLIAPKDLEKLGAAAQGRTAGPRNFIVTPNPYAYFARVAQMFIDLATPPRAAGVHPSATIDPAAQVAATAVIGPHVTIEAGAVIEDGVQLDANVFVGRGTTIGAGSHFYPNASVYHGCKVGPRAIVHAGAVIGSDGFGFAPDFVGDGDARTGSWVKIPQVGGVTIGPDVEIGANTTIDRGAMADTVIEECVKIDNQVQIGHNCRIGAYTVIAGSAGIAGSTTIGRHCMIGGAAGIAGHVTLGDYVIITAKSGVSKSLPKAGIYTSAFPAVDHGEWNKSAALVRNLDKLRERIKALEAALAAQGGTDA.

The Proton acceptor role is filled by His258.

Belongs to the transferase hexapeptide repeat family. LpxD subfamily. Homotrimer.

It carries out the reaction a UDP-3-O-[(3R)-3-hydroxyacyl]-alpha-D-glucosamine + a (3R)-hydroxyacyl-[ACP] = a UDP-2-N,3-O-bis[(3R)-3-hydroxyacyl]-alpha-D-glucosamine + holo-[ACP] + H(+). The protein operates within bacterial outer membrane biogenesis; LPS lipid A biosynthesis. Catalyzes the N-acylation of UDP-3-O-acylglucosamine using 3-hydroxyacyl-ACP as the acyl donor. Is involved in the biosynthesis of lipid A, a phosphorylated glycolipid that anchors the lipopolysaccharide to the outer membrane of the cell. This is UDP-3-O-acylglucosamine N-acyltransferase from Burkholderia orbicola (strain MC0-3).